The chain runs to 526 residues: Amine oxidase [flavin-containing] A (526 aa).

M1 is modified (N-acetylmethionine). The Cytoplasmic portion of the chain corresponds to M1 to S497. S383 is subject to Phosphoserine. C406 carries the post-translational modification S-8alpha-FAD cysteine. A helical; Anchor for type IV membrane protein transmembrane segment spans residues V498–L518. Over Y519–S526 the chain is Mitochondrial intermembrane. Residues K520–K522 are interaction with membrane phospholipid headgroups.

The protein belongs to the flavin monoamine oxidase family. As to quaternary structure, monomer, homo- or heterodimer (containing two subunits of similar size). Each subunit contains a covalently bound flavin. Enzymatically active as monomer. The cofactor is FAD.

Its subcellular location is the mitochondrion outer membrane. It catalyses the reaction a secondary aliphatic amine + O2 + H2O = a primary amine + an aldehyde + H2O2. The catalysed reaction is a primary methyl amine + O2 + H2O = an aldehyde + H2O2 + NH4(+). It carries out the reaction serotonin + O2 + H2O = (5-hydroxyindol-3-yl)acetaldehyde + H2O2 + NH4(+). The enzyme catalyses (R)-adrenaline + O2 + H2O = (R)-3,4-dihydroxymandelaldehyde + methylamine + H2O2. It catalyses the reaction dopamine + O2 + H2O = 3,4-dihydroxyphenylacetaldehyde + H2O2 + NH4(+). The catalysed reaction is tyramine + O2 + H2O = (4-hydroxyphenyl)acetaldehyde + H2O2 + NH4(+). It carries out the reaction (R)-noradrenaline + O2 + H2O = (R)-3,4-dihydroxymandelaldehyde + H2O2 + NH4(+). The enzyme catalyses kynuramine + O2 + H2O = 3-(2-aminophenyl)-3-oxopropanal + H2O2 + NH4(+). It catalyses the reaction tryptamine + O2 + H2O = indole-3-acetaldehyde + H2O2 + NH4(+). The catalysed reaction is 2-phenylethylamine + O2 + H2O = 2-phenylacetaldehyde + H2O2 + NH4(+). Its function is as follows. Catalyzes the oxidative deamination of biogenic and xenobiotic amines and has important functions in the metabolism of neuroactive and vasoactive amines in the central nervous system and peripheral tissues. Preferentially oxidizes serotonin. Also catalyzes the oxidative deamination of kynuramine to 3-(2-aminophenyl)-3-oxopropanal that can spontaneously condense to 4-hydroxyquinoline. The sequence is that of Amine oxidase [flavin-containing] A from Mus musculus (Mouse).